The chain runs to 174 residues: MTTIVSVRRNNQVVIAGDGQVSLGNTVMKGNARKVRRLYHNKVLAGFAGGTADAFTLFERFEAKLEMHQGHLMRAAVEMAKDWRSDKVLRKLEALLAVADGEASLIITGNGDVVQPENDLIAIGSGGNFAQSAATALLENTELSALEIAEKSLTIAGDICVFTNQFKTIEELKY.

Residue T2 is part of the active site. 3 residues coordinate Na(+): G157, C160, and T163.

It belongs to the peptidase T1B family. HslV subfamily. A double ring-shaped homohexamer of HslV is capped on each side by a ring-shaped HslU homohexamer. The assembly of the HslU/HslV complex is dependent on binding of ATP.

The protein resides in the cytoplasm. It catalyses the reaction ATP-dependent cleavage of peptide bonds with broad specificity.. With respect to regulation, allosterically activated by HslU binding. Its function is as follows. Protease subunit of a proteasome-like degradation complex believed to be a general protein degrading machinery. The polypeptide is ATP-dependent protease subunit HslV (Shewanella piezotolerans (strain WP3 / JCM 13877)).